The following is a 98-amino-acid chain: NADH-ubiquinone oxidoreductase chain 4L (98 aa).

The next 3 helical transmembrane spans lie at 1 to 21 (MTLIHMNILMAFSMSLVGLLM), 29 to 49 (ALLCLEGMMLSLFILAALTIL), and 61 to 81 (IILLVFAACEAAIGLALLVMV).

Belongs to the complex I subunit 4L family. As to quaternary structure, core subunit of respiratory chain NADH dehydrogenase (Complex I) which is composed of 45 different subunits.

It localises to the mitochondrion inner membrane. The enzyme catalyses a ubiquinone + NADH + 5 H(+)(in) = a ubiquinol + NAD(+) + 4 H(+)(out). Core subunit of the mitochondrial membrane respiratory chain NADH dehydrogenase (Complex I) which catalyzes electron transfer from NADH through the respiratory chain, using ubiquinone as an electron acceptor. Part of the enzyme membrane arm which is embedded in the lipid bilayer and involved in proton translocation. The protein is NADH-ubiquinone oxidoreductase chain 4L (MT-ND4L) of Balaenoptera omurai (Omura's baleen whale).